A 436-amino-acid chain; its full sequence is 3-ketoacyl-CoA thiolase (436 aa).

C99 acts as the Acyl-thioester intermediate in catalysis. Catalysis depends on proton acceptor residues H392 and C422.

The protein belongs to the thiolase-like superfamily. Thiolase family. Heterotetramer of two alpha chains (FadJ) and two beta chains (FadI).

The protein resides in the cytoplasm. It carries out the reaction an acyl-CoA + acetyl-CoA = a 3-oxoacyl-CoA + CoA. Its pathway is lipid metabolism; fatty acid beta-oxidation. In terms of biological role, catalyzes the final step of fatty acid oxidation in which acetyl-CoA is released and the CoA ester of a fatty acid two carbons shorter is formed. The protein is 3-ketoacyl-CoA thiolase of Yersinia enterocolitica serotype O:8 / biotype 1B (strain NCTC 13174 / 8081).